A 248-amino-acid polypeptide reads, in one-letter code: Cobalt transport protein CbiM (248 aa).

A signal peptide spans 1 to 31 (MLKVIKKYRKFITFLMIGLVYTLAYPATAHA). The next 6 membrane-spanning stretches (helical) occupy residues 39 to 59 (LPPR…IYGL), 75 to 95 (VMLA…LPSV), 107 to 127 (LGTV…VLLF), 139 to 159 (TLGA…YAVW), 173 to 195 (LFLC…LAIV), and 213 to 233 (IYAI…VIVY).

Belongs to the CbiM family. Forms an energy-coupling factor (ECF) transporter complex composed of an ATP-binding protein (A component, CbiO), a transmembrane protein (T component, CbiQ) and 2 possible substrate-capture proteins (S components, CbiM and CbiN) of unknown stoichimetry.

Its subcellular location is the cell membrane. It participates in cofactor biosynthesis; adenosylcobalamin biosynthesis. In terms of biological role, part of the energy-coupling factor (ECF) transporter complex CbiMNOQ involved in cobalt import. This is Cobalt transport protein CbiM from Limosilactobacillus reuteri (strain DSM 20016) (Lactobacillus reuteri).